Consider the following 126-residue polypeptide: MAFSGTWQVYAQENYEEFLRAISLPEDVIKLAKDVKPVTEIQQTGNDFVITSKTPGKSVTNSFTIGKEAEITTMDGRKLKCIVKLEGGKLISETEKFSHKQEIKGGEMIETLTVAGTTMVRKSKKV.

Ala2 is subject to N-acetylalanine.

Belongs to the calycin superfamily. Fatty-acid binding protein (FABP) family. In terms of tissue distribution, liver.

The protein localises to the cytoplasm. Functionally, binds free fatty acids and their coenzyme A derivatives, bilirubin, and some other small molecules in the cytoplasm. May be involved in intracellular lipid transport this L-FABP binds only one fatty acid/molecule. Has more affinity for trans-parinaric acid than for cis-parinaric acid. The protein is Fatty acid-binding protein, liver (fabp1) of Rhamdia sapo (South American catfish).